The sequence spans 149 residues: Large ribosomal subunit protein uL13 (149 aa).

Belongs to the universal ribosomal protein uL13 family. Part of the 50S ribosomal subunit.

In terms of biological role, this protein is one of the early assembly proteins of the 50S ribosomal subunit, although it is not seen to bind rRNA by itself. It is important during the early stages of 50S assembly. This Thermosipho africanus (strain TCF52B) protein is Large ribosomal subunit protein uL13.